The sequence spans 329 residues: GTPase Obg (329 aa).

The Obg domain maps to Met1–Leu159. The OBG-type G domain occupies Ala160 to Gly328. Residues Gly166 to Ser173, Phe191 to Val195, Asp213 to Gly216, Asn280 to Glu283, and Ser309 to Ala311 each bind ATP. Mg(2+) contacts are provided by Ser173 and Thr193.

Belongs to the TRAFAC class OBG-HflX-like GTPase superfamily. OBG GTPase family. Monomer. The cofactor is Mg(2+).

The protein localises to the cytoplasm. Its function is as follows. An essential GTPase which binds GTP, GDP and possibly (p)ppGpp with moderate affinity, with high nucleotide exchange rates and a fairly low GTP hydrolysis rate. Plays a role in control of the cell cycle, stress response, ribosome biogenesis and in those bacteria that undergo differentiation, in morphogenesis control. In Synechococcus sp. (strain CC9605), this protein is GTPase Obg.